The chain runs to 288 residues: Light-independent protochlorophyllide reductase iron-sulfur ATP-binding protein (288 aa).

Residues 12-17 (GIGKST) and lysine 41 each bind ATP. Serine 16 lines the Mg(2+) pocket. Cysteine 97 and cysteine 131 together coordinate [4Fe-4S] cluster. 182-183 (NR) contributes to the ATP binding site.

Belongs to the NifH/BchL/ChlL family. As to quaternary structure, homodimer. Protochlorophyllide reductase is composed of three subunits; ChlL, ChlN and ChlB. It depends on [4Fe-4S] cluster as a cofactor.

It catalyses the reaction chlorophyllide a + oxidized 2[4Fe-4S]-[ferredoxin] + 2 ADP + 2 phosphate = protochlorophyllide a + reduced 2[4Fe-4S]-[ferredoxin] + 2 ATP + 2 H2O. It functions in the pathway porphyrin-containing compound metabolism; chlorophyll biosynthesis (light-independent). Component of the dark-operative protochlorophyllide reductase (DPOR) that uses Mg-ATP and reduced ferredoxin to reduce ring D of protochlorophyllide (Pchlide) to form chlorophyllide a (Chlide). This reaction is light-independent. The L component serves as a unique electron donor to the NB-component of the complex, and binds Mg-ATP. This chain is Light-independent protochlorophyllide reductase iron-sulfur ATP-binding protein, found in Picosynechococcus sp. (strain ATCC 27264 / PCC 7002 / PR-6) (Agmenellum quadruplicatum).